Reading from the N-terminus, the 50-residue chain is Large ribosomal subunit protein bL32 (50 aa).

Positions 1 to 26 (MAVPKRRVSHTRSAKRRTHYKITLKK) are enriched in basic residues. Residues 1 to 50 (MAVPKRRVSHTRSAKRRTHYKITLKKPVKDSDGSWKMPHMVNPNTGEYKN) are disordered.

It belongs to the bacterial ribosomal protein bL32 family.

The protein is Large ribosomal subunit protein bL32 of Aliarcobacter butzleri (strain RM4018) (Arcobacter butzleri).